Consider the following 229-residue polypeptide: Putative N-acetylmannosamine-6-phosphate 2-epimerase (229 aa).

This sequence belongs to the NanE family.

The catalysed reaction is an N-acyl-D-glucosamine 6-phosphate = an N-acyl-D-mannosamine 6-phosphate. The protein operates within amino-sugar metabolism; N-acetylneuraminate degradation; D-fructose 6-phosphate from N-acetylneuraminate: step 3/5. Converts N-acetylmannosamine-6-phosphate (ManNAc-6-P) to N-acetylglucosamine-6-phosphate (GlcNAc-6-P). The protein is Putative N-acetylmannosamine-6-phosphate 2-epimerase of Pediococcus pentosaceus (strain ATCC 25745 / CCUG 21536 / LMG 10740 / 183-1w).